The chain runs to 778 residues: Serine/threonine-protein kinase BRSK1 (778 aa).

The segment covering 1–12 (MSSGSKEGGGGS) has biased composition (gly residues). Positions 1–29 (MSSGSKEGGGGSPAYHLPHPHPHPPQHAQ) are disordered. A Protein kinase domain is found at 34–285 (YRLEKTLGKG…LEQIQKHPWY (252 aa)). Residues 40–48 (LGKGQTGLV) and K63 contribute to the ATP site. Catalysis depends on D156, which acts as the Proton acceptor. A Phosphothreonine; by LKB1 modification is found at T189. One can recognise a UBA domain in the interval 314-356 (ELDPDVLESMASLGCFRDRERLHRELRSEEENQEKMIYYLLLD). The segment covering 362–383 (PSCEDQDLPPRNDVDPPRKRVD) has biased composition (basic and acidic residues). The disordered stretch occupies residues 362 to 548 (PSCEDQDLPP…SPGGGVGGAA (187 aa)). Residues S399, S443, S447, and S450 each carry the phosphoserine modification. A compositionally biased stretch (low complexity) spans 430 to 457 (SRSVSGASTGLSSSPLSSPRSPVFSFSP). 4 positions are modified to omega-N-methylarginine: R466, R481, R484, and R498. The span at 491–508 (QPPPPSARSTPLPGPPGS) shows a compositional bias: pro residues. S508 carries the post-translational modification Phosphoserine. The segment covering 509–533 (PRSSGGTPLHSPLHTPRASPTGTPG) has biased composition (low complexity). R525 is modified (omega-N-methylarginine). T529 and T535 each carry phosphothreonine. Position 550 is an omega-N-methylarginine (R550). The interval 560–588 (FLGSPRFHRRKMQVPTAEEMSSLTPESSP) is disordered. T583 bears the Phosphothreonine mark. S586, S587, and S601 each carry phosphoserine. Residues 719-778 (QPSVQALADEKNGAQTRPAGTPPRSLQPPPGRSDPDLSSSPRRGPPKDKKLLATNGTPLP) form a disordered region.

It belongs to the protein kinase superfamily. CAMK Ser/Thr protein kinase family. SNF1 subfamily. Mg(2+) serves as cofactor. Phosphorylated at Thr-189 by STK11/LKB1 in complex with STE20-related adapter-alpha (STRADA) pseudo kinase and CAB39. Not phosphorylated at Thr-189 by CaMKK2. In contrast, it is phosphorylated and activated by CaMKK1. May be inactivated via dephosphorylation of Thr-189 by PP2C. Present in the gray matter of the brain and spinal cord (at protein level). Expressed in the nervous system, distributed within the brain and spinal cord of embryonic and postnatal animals.

The protein resides in the cytoplasm. The protein localises to the nucleus. It is found in the cytoskeleton. It localises to the microtubule organizing center. Its subcellular location is the centrosome. The protein resides in the synapse. The protein localises to the presynaptic active zone. It is found in the cytoplasmic vesicle. It localises to the secretory vesicle. Its subcellular location is the synaptic vesicle. The catalysed reaction is L-seryl-[protein] + ATP = O-phospho-L-seryl-[protein] + ADP + H(+). It carries out the reaction L-threonyl-[protein] + ATP = O-phospho-L-threonyl-[protein] + ADP + H(+). The enzyme catalyses L-seryl-[tau protein] + ATP = O-phospho-L-seryl-[tau protein] + ADP + H(+). It catalyses the reaction L-threonyl-[tau protein] + ATP = O-phospho-L-threonyl-[tau protein] + ADP + H(+). Activated by phosphorylation on Thr-189 by STK11/LKB1. Its function is as follows. Serine/threonine-protein kinase that plays a key role in polarization of neurons and centrosome duplication. Phosphorylates CDC25B, CDC25C, MAPT/TAU, RIMS1, TUBG1, TUBG2 and WEE1. Following phosphorylation and activation by STK11/LKB1, acts as a key regulator of polarization of cortical neurons, probably by mediating phosphorylation of microtubule-associated proteins such as MAPT/TAU at 'Thr-504' and 'Ser-554'. Also regulates neuron polarization by mediating phosphorylation of WEE1 at 'Ser-642' in postmitotic neurons, leading to down-regulate WEE1 activity in polarized neurons. In neurons, localizes to synaptic vesicles and plays a role in neurotransmitter release, possibly by phosphorylating RIMS1. Also acts as a positive regulator of centrosome duplication by mediating phosphorylation of gamma-tubulin (TUBG1 and TUBG2) at 'Ser-131', leading to translocation of gamma-tubulin and its associated proteins to the centrosome. Involved in the UV-induced DNA damage checkpoint response, probably by inhibiting CDK1 activity through phosphorylation and activation of WEE1, and inhibition of CDC25B and CDC25C. The chain is Serine/threonine-protein kinase BRSK1 (Brsk1) from Mus musculus (Mouse).